A 1492-amino-acid chain; its full sequence is Putative leucine-rich repeat-containing protein DDB_G0290503 (1492 aa).

The 110-residue stretch at 2 to 111 folds into the PH domain; the sequence is SILLEGYLEK…WIEGIKDAIK (110 aa). LRR repeat units follow at residues 123 to 144, 180 to 204, 258 to 284, 329 to 351, 352 to 375, 389 to 413, 439 to 462, 519 to 543, 551 to 575, 579 to 603, 632 to 656, 728 to 752, 806 to 830, 831 to 855, 895 to 919, 927 to 951, 955 to 979, 1013 to 1036, 1044 to 1068, 1138 to 1164, and 1210 to 1232; these read LDGLIKTKDNDIIKLREKIKHL, IKSLTLQLSSKDESMKSLEKQVEKL, QESLNEIKDENNDLQSLIDTQKQQFEK, KNQFSTKLQLVNNEIQSLKSIVD, DKLKEIQLKDNQLTQLNQQHEIDN, ISKISNQLNEKDNKIQELSKQSIDK, LEKLNDINQLSNKLQDKENQILEI, INELQSNLNENQNKINELIENNQSS, LNQLSDKLQEKDEKLKSLESSIIER, IDQLQDNLNEKQDKINELVENNESS, LDELQSKLNEKQNEINQLIENNQSS, LKSLDSIIIENQEKLVQLTKSNQDS, LDELQSKLNEKQNEINELIENNQSS, INELQSKLNEKQNKINELVENNESS, LIQLSDQLQEKENQLKSFESSIIER, LNQLQSKLNEKQNEIDQITENNQSS, NEKLNEINEKDNKINELIQTNESL, FENLEQELEEKNNKILDLNSQIIDV, LQDLENELNLEKDTVNEKNDDINELKE, and NAHLKINEKDNEIHSLSKEGFNE. The disordered stretch occupies residues 1272-1292; the sequence is RSSSSSLHQQQQMISPDLSNS. Residues 1274 to 1286 are compositionally biased toward low complexity; it reads SSSSLHQQQQMIS. LRR repeat units follow at residues 1424 to 1444 and 1445 to 1468; these read SSEKLQSIQLEIDTIREKYFF and AIARSLKLQGAQMGWSMSRSIFDM.

This chain is Putative leucine-rich repeat-containing protein DDB_G0290503, found in Dictyostelium discoideum (Social amoeba).